Here is a 331-residue protein sequence, read N- to C-terminus: Phosphate acyltransferase (331 aa).

It belongs to the PlsX family. Homodimer. Probably interacts with PlsY.

The protein resides in the cytoplasm. The enzyme catalyses a fatty acyl-[ACP] + phosphate = an acyl phosphate + holo-[ACP]. It participates in lipid metabolism; phospholipid metabolism. Catalyzes the reversible formation of acyl-phosphate (acyl-PO(4)) from acyl-[acyl-carrier-protein] (acyl-ACP). This enzyme utilizes acyl-ACP as fatty acyl donor, but not acyl-CoA. The polypeptide is Phosphate acyltransferase (Lactococcus lactis subsp. cremoris (strain SK11)).